The chain runs to 275 residues: MTVIALFGAGGKMGYRLAKNLKGSRFDVRHVEVSDAGKARLKNDLDLSCVPVDEALNGAEVVILAVPDTAIGKVAAGIVDKLKPGTMVVALDAAAPFAGHLPKRDELTYFVTHPCHPPIFNDETDMQAKKDHFGGLFAKQHIVSALMQGPESAYALGEEIAKVIWAPVMRSHRVTVEQMAMLEPGLSETVCASLLVVMRQAMDECVARGVPEDAARDFLLGHMNVLGAVIFKEVDGVFSDACNKAIEFGIPALMRDDWKNVFEPKEIAASIQRIT.

NAD(+) contacts are provided by residues 11–13 (GKM), glutamate 32, and aspartate 68. Zn(2+)-binding residues include histidine 113 and glutamate 183.

This sequence belongs to the ApnO family. The cofactor is Zn(2+).

It carries out the reaction D-apionate + NAD(+) = 3-oxoisoapionate + NADH + H(+). The protein operates within carbohydrate metabolism. Functionally, involved in catabolism of D-apiose. Catalyzes the conversion of D-apionate to 3-oxo-isoapionate. In Rhizobium rhizogenes (strain K84 / ATCC BAA-868) (Agrobacterium radiobacter), this protein is D-apionate oxidoisomerase.